Reading from the N-terminus, the 4660-residue chain is Low-density lipoprotein receptor-related protein 2 (4660 aa).

Residues 1 to 25 (MERGAAAAAWMLLLAIAACLAPVSG) form the signal peptide. Over 26 to 4425 (QECGSGNFRC…LSRGIPPGTT (4400 aa)) the chain is Extracellular. 7 LDL-receptor class A domains span residues 27-63 (ECGS…IGCP), 66-104 (SCGS…QNCP), 107-143 (TCSS…RNCY), 146-180 (TCDQ…ANCT), 182-218 (LCSQ…HNCN), 221-257 (TCGG…DGCE), and 264-307 (TCYP…RYCG). 21 disulfide bridges follow: Cys28–Cys40, Cys35–Cys53, Cys47–Cys62, Cys67–Cys80, Cys74–Cys93, Cys87–Cys103, Cys108–Cys120, Cys115–Cys133, Cys127–Cys142, Cys147–Cys157, Cys152–Cys170, Cys164–Cys179, Cys183–Cys195, Cys190–Cys208, Cys202–Cys217, Cys222–Cys234, Cys229–Cys247, Cys241–Cys256, Cys265–Cys278, Cys272–Cys291, and Cys285–Cys306. N-linked (GlcNAc...) asparagine glycosylation is found at Asn159 and Asn178. Asn299, Asn340, Asn387, and Asn462 each carry an N-linked (GlcNAc...) asparagine glycan. LDL-receptor class B repeat units lie at residues 435–477 (HRVF…DWIN), 478–520 (NKLY…DPTV), 521–567 (GYLF…DLVS), and 568–612 (KRVY…FEEH). A glycan (N-linked (GlcNAc...) asparagine) is linked at Asn657. 4 LDL-receptor class B repeats span residues 752–794 (STIF…DWIS), 795–836 (RNLY…HPAA), 837–880 (GYMF…DWST), and 881–924 (SRLY…FKDN). Asn865 carries an N-linked (GlcNAc...) asparagine glycan. The 37-residue stretch at 1024–1060 (QCGSSSFPCNNGKCVPSIFRCDGVDDCHDNSDEHQCG) folds into the LDL-receptor class A 8 domain. Cystine bridges form between Cys1025-Cys1037, Cys1032-Cys1050, and Cys1044-Cys1059. Asn1063 is a glycosylation site (N-linked (GlcNAc...) asparagine). LDL-receptor class A domains lie at 1065–1102 (TCSS…QNCP), 1109–1145 (TCPP…KNCQ), 1149–1185 (TCHP…AGCV), 1187–1224 (NCTS…AGCP), 1230–1268 (MCHP…NGCV), 1271–1307 (TCSP…KDCP), and 1312–1350 (HCPS…PLCN). Cystine bridges form between Cys1066/Cys1079, Cys1073/Cys1092, Cys1086/Cys1101, Cys1110/Cys1122, Cys1117/Cys1135, Cys1129/Cys1144, Cys1150/Cys1162, Cys1157/Cys1175, and Cys1169/Cys1184. Ca(2+) is bound by residues Trp1127, Asp1130, Asp1132, Asp1134, Asp1140, and Glu1141. The N-linked (GlcNAc...) asparagine glycan is linked to Asn1187. 18 disulfide bridges follow: Cys1188-Cys1201, Cys1195-Cys1214, Cys1208-Cys1223, Cys1231-Cys1244, Cys1238-Cys1257, Cys1251-Cys1267, Cys1272-Cys1284, Cys1279-Cys1297, Cys1291-Cys1306, Cys1313-Cys1326, Cys1320-Cys1339, Cys1333-Cys1349, Cys1354-Cys1365, Cys1361-Cys1374, Cys1376-Cys1389, Cys1395-Cys1405, Cys1401-Cys1414, and Cys1416-Cys1429. Tyr1206, Asp1209, Val1211, Asp1213, Asp1219, and Glu1220 together coordinate Ca(2+). N-linked (GlcNAc...) asparagine glycans are attached at residues Asn1328 and Asn1341. The 41-residue stretch at 1350–1390 (NQDSCLHFNGGCTHRCIQGPFGATCVCPIGYQLANDTKTCE) folds into the EGF-like 1 domain. Residue Asn1384 is glycosylated (N-linked (GlcNAc...) asparagine). One can recognise an EGF-like 2; calcium-binding domain in the interval 1391–1430 (DVNECDIPGFCSQHCVNMRGSFRCACDPEYTLESDGRTCK). N-linked (GlcNAc...) asparagine glycosylation is found at Asn1451, Asn1497, and Asn1551. 5 LDL-receptor class B repeats span residues 1479–1521 (GRVF…DWIG), 1522–1564 (RNIY…DPRM), 1567–1610 (NVMF…DYPN), 1611–1655 (RLIY…FEDS), and 1656–1696 (VFWT…IHPS). N-linked (GlcNAc...) asparagine glycans are attached at residues Asn1676, Asn1733, and Asn1811. LDL-receptor class B repeat units follow at residues 1791 to 1833 (QFIY…DWVS), 1834 to 1883 (RNIY…DPAR), 1884 to 1931 (GKLY…DIQE), 1932 to 1973 (QKLY…HGSF), 1974 to 2014 (LYYS…YHHR), 2108 to 2157 (GFIY…DWVA), 2158 to 2202 (GNLY…DPKH), 2203 to 2246 (RYLF…DHDT), 2247 to 2290 (GYIY…FGES), and 2291 to 2333 (IIWV…FDEH). Residues Asn2131, Asn2134, Asn2178, and Asn2225 are each glycosylated (N-linked (GlcNAc...) asparagine). Asn2396 carries N-linked (GlcNAc...) asparagine glycosylation. LDL-receptor class B repeat units lie at residues 2432-2478 (NRIF…DWIN), 2479-2519 (RRIY…DPCR), 2520-2563 (GYMY…DLET), 2564-2605 (DLLY…YGQY), and 2606-2647 (IYWT…VVKT). 2 N-linked (GlcNAc...) asparagine glycosylation sites follow: Asn2488 and Asn2548. LDL-receptor class A domains follow at residues 2700-2738 (RCNQ…TVCA), 2741-2777 (TCRS…AGCL), 2780-2819 (SCNS…KNCP), 2822-2861 (TCQP…IYCA), 2864-2902 (TCRS…DTCG), 2907-2946 (SCSA…HHCE), 2949-2991 (NCSS…QNCT), 2994-3030 (ACST…RGCS), 3033-3071 (PCRD…HLCH), and 3076-3112 (TCPP…KGCG). Intrachain disulfides connect Cys2701-Cys2713, Cys2708-Cys2726, Cys2720-Cys2737, Cys2742-Cys2754, Cys2749-Cys2767, Cys2761-Cys2776, Cys2781-Cys2794, Cys2789-Cys2807, Cys2801-Cys2818, Cys2823-Cys2836, Cys2830-Cys2849, Cys2843-Cys2860, Cys2865-Cys2878, Cys2872-Cys2891, Cys2885-Cys2901, Cys2908-Cys2920, Cys2915-Cys2933, and Cys2927-Cys2945. N-linked (GlcNAc...) asparagine glycosylation occurs at Asn2782. Residue Asn2810 is glycosylated (N-linked (GlcNAc...) asparagine). A glycan (N-linked (GlcNAc...) asparagine) is linked at Asn2949. 18 cysteine pairs are disulfide-bonded: Cys2950-Cys2967, Cys2957-Cys2980, Cys2974-Cys2990, Cys2995-Cys3007, Cys3002-Cys3020, Cys3014-Cys3029, Cys3034-Cys3046, Cys3041-Cys3059, Cys3053-Cys3070, Cys3077-Cys3089, Cys3084-Cys3102, Cys3096-Cys3111, Cys3116-Cys3128, Cys3124-Cys3137, Cys3139-Cys3152, Cys3158-Cys3169, Cys3165-Cys3178, and Cys3180-Cys3193. Residue Asn2989 is glycosylated (N-linked (GlcNAc...) asparagine). Residues 3112 to 3153 (GINECQDSSISHCDHNCTDTITSFYCSCLPGYKLMSDKRTCV) form the EGF-like 3 domain. A glycan (N-linked (GlcNAc...) asparagine) is linked at Asn3127. An EGF-like 4; calcium-binding domain is found at 3154–3194 (DIDECKETPQLCSQKCENVIGSYICKCAPGYIREPDGKSCR). 4 N-linked (GlcNAc...) asparagine glycosylation sites follow: Asn3213, Asn3259, Asn3317, and Asn3357. 5 LDL-receptor class B repeats span residues 3241–3283 (ERLY…DWVS), 3284–3326 (RKLY…ENPR), 3335–3378 (GYVY…DYTN), 3379–3421 (DLLY…FEDT), and 3422–3462 (VFWT…LHPY). N-linked (GlcNAc...) asparagine glycosylation occurs at Asn3448. LDL-receptor class A domains follow at residues 3513 to 3551 (MCSS…DLCP), 3554 to 3592 (FCRL…VLCE), 3595 to 3633 (RCEA…SHCA), 3636 to 3674 (TCRP…HECM), 3679 to 3717 (NCDN…QGCE), 3720 to 3757 (PCHP…ESCV), 3760 to 3796 (ECTE…RDCE), and 3799 to 3835 (TCHP…SACP). 24 disulfide bridges follow: Cys3514/Cys3527, Cys3521/Cys3540, Cys3534/Cys3550, Cys3555/Cys3567, Cys3562/Cys3580, Cys3574/Cys3591, Cys3596/Cys3608, Cys3603/Cys3621, Cys3615/Cys3632, Cys3637/Cys3649, Cys3644/Cys3662, Cys3656/Cys3673, Cys3680/Cys3694, Cys3688/Cys3707, Cys3701/Cys3716, Cys3721/Cys3734, Cys3729/Cys3747, Cys3741/Cys3756, Cys3761/Cys3773, Cys3768/Cys3786, Cys3780/Cys3795, Cys3800/Cys3812, Cys3807/Cys3825, and Cys3819/Cys3834. N-linked (GlcNAc...) asparagine glycosylation is present at Asn3566. Asn3682 is a glycosylation site (N-linked (GlcNAc...) asparagine). A glycan (N-linked (GlcNAc...) asparagine) is linked at Asn3840. 3 LDL-receptor class A domains span residues 3843-3881 (YCPA…HLCF), 3884-3923 (PCES…EHCR), and 3929-3965 (PCTD…TGCN). 9 cysteine pairs are disulfide-bonded: Cys3844/Cys3856, Cys3851/Cys3869, Cys3863/Cys3880, Cys3885/Cys3898, Cys3893/Cys3911, Cys3905/Cys3922, Cys3930/Cys3942, Cys3937/Cys3955, and Cys3949/Cys3964. 2 N-linked (GlcNAc...) asparagine glycosylation sites follow: Asn3969 and Asn3980. Residues 4009–4050 (DINECEEFGICPQSCRNSKGSYECFCVDGFKSMSTHYGERCA) form the EGF-like 5; calcium-binding domain. Cystine bridges form between Cys4013–Cys4023, Cys4019–Cys4032, and Cys4034–Cys4049. N-linked (GlcNAc...) asparagine glycosylation occurs at Asn4070. LDL-receptor class B repeat units lie at residues 4156–4198 (RHIY…NPKL), 4199–4242 (GLMF…DYLN), and 4244–4285 (DRIY…FEDQ). Residue Asn4329 is glycosylated (N-linked (GlcNAc...) asparagine). The 35-residue stretch at 4379–4413 (MPSPCRCMHGGSCYFDENDLPKCKCSSGYSGEYCE) folds into the EGF-like 6 domain. 3 disulfide bridges follow: Cys4383-Cys4391, Cys4385-Cys4401, and Cys4403-Cys4412. Residues 4426-4446 (MALLLTFAMVIIVGALVLVGF) traverse the membrane as a helical segment. Over 4447–4660 (FHYRKTGSLL…ANLVKEDSDV (214 aa)) the chain is Cytoplasmic. The SH3-binding signature appears at 4454 to 4463 (SLLPSLPKLP). Positions 4457 to 4462 (PSLPKL) match the PxLPxI/L motif 1; mediates interaction with ANKRA2 motif. The PxLPxI/L motif 2; mediates interaction with ANKRA2 motif lies at 4460 to 4465 (PKLPSL). Phosphoserine occurs at positions 4464 and 4467. The short motif at 4522–4527 (FENPMY) is the Endocytosis signal element. Positions 4558-4660 (QNYGRSIDPS…ANLVKEDSDV (103 aa)) are disordered. At Ser4577 the chain carries Phosphoserine. Positions 4597–4610 (QTTNFENPIYAEMD) are interaction with DAB2. Positions 4603–4606 (NPIY) match the NPXY motif motif. Positions 4606–4609 (YAEM) match the SH2-binding motif. The SH3-binding motif lies at 4619–4630 (VAPPPSPSLPAK). Ser4624 is subject to Phosphoserine. The span at 4627–4636 (LPAKASKRSS) shows a compositional bias: low complexity. Phosphothreonine is present on Thr4637. Ser4658 carries the post-translational modification Phosphoserine.

This sequence belongs to the LDLR family. As to quaternary structure, binds plasminogen, extracellular matrix components, plasminogen activator-plasminogen activator inhibitor type I complex, apolipoprotein E-enriched beta-VLDL, lipoprotein lipase, lactoferrin, CLU/clusterin and calcium. Forms a multimeric complex together with LRPAP1. Interacts (via PxLPxI/L motif) with ANKRA2 (via ankyrin repeats). Interacts with LRP2BP. Interacts (via NPXY motif) with DAB2; the interaction is not affected by tyrosine phosphorylation of the NPXY motif. Interacts with MB. Interacts with BMP4. Interacts with the Sonic hedgehog protein N-product which is the active product of SHH. Interacts with CST3 in a calcium-dependent manner. Interacts with the vitamin-D binding protein GC/DBP. Interacts with sex hormone-binding protein SHBG. Interacts with angiotensin-2. Also interacts with angiotensin 1-7. Interacts with APOM. Interacts with selenoprotein SEPP1. Interacts with LEP. Interacts with ALB. Interacts with the antiapoptotic protein BIRC5/survivin. Interacts with matrix metalloproteinase MMP2 in complex with metalloproteinase inhibitor TIMP1. In neurons, forms a trimeric complex with APP and APPB1/FE65. Interacts with LDLRAP1/ARH; mediates trafficking of LRP2 to the endocytic recycling compartment. Does not interact with beta-amyloid protein 40 alone but interacts with the complex composed of beta-amyloid protein 40 and CLU/APOJ. Interacts with MDK. A fraction undergoes proteolytic cleavage of the extracellular domain at the cell membrane to generate a cytoplasmic tail fragment. This is internalized into the early endosome from where it trafficks in an LDLRAP1/ARH-dependent manner to the endocytic recycling compartment (ERC). In the ERC, it is further cleaved by gamma-secretase to release a fragment which translocates to the nucleus and mediates transcriptional repression. In terms of processing, N-glycosylation is required for ligand binding. Contains core-fucosylated N-glycans in kidney proximal convoluted tubules (PCTs) and hybrid-type N-glycans in proximal straight tubules (PSTs). Interacts with ligands in a glycoform-dependent manner. Retinol-binding protein and the vitamin D carrier GC/DBP are endocytosed primarily by PCTs, albumin is endocytosed equally by PCTs and PSTs, and the aminoglycoside kanamycin is endocytosed primarily by PSTs. In terms of tissue distribution, in the inner ear, strongly expressed in the marginal cells of the stria vascularis (at protein level). In the female reproductive tract, expressed on the luminal side of the uterine epithelium (at protein level). In the adult brain, expressed in ependymal cells of the lateral ventricles where expression is restricted to the ependyma that faces the stem cell niche (at protein level). Expressed in neurons throughout the brain including in the hippocampus, limbic cortices and cerebellum (at protein level). In the developing optic nerve, expressed exclusively in astrocytes at 14.5 dpc, 16.5 dpc and 18.5 dpc (at protein level).

It localises to the apical cell membrane. Its subcellular location is the endosome lumen. It is found in the membrane. The protein resides in the coated pit. The protein localises to the cell projection. It localises to the dendrite. Its subcellular location is the axon. Multiligand endocytic receptor. Acts together with CUBN to mediate endocytosis of high-density lipoproteins. Mediates receptor-mediated uptake of polybasic drugs such as aprotinin, aminoglycosides and polymyxin B. In the kidney, mediates the tubular uptake and clearance of leptin. Also mediates transport of leptin across the blood-brain barrier through endocytosis at the choroid plexus epithelium. Endocytosis of leptin in neuronal cells is required for hypothalamic leptin signaling and leptin-mediated regulation of feeding and body weight. Mediates endocytosis and subsequent lysosomal degradation of CST3 in kidney proximal tubule cells. Mediates renal uptake of 25-hydroxyvitamin D3 in complex with the vitamin D3 transporter GC/DBP. Mediates renal uptake of metallothionein-bound heavy metals. Together with CUBN, mediates renal reabsorption of myoglobin. Mediates renal uptake and subsequent lysosomal degradation of APOM. Plays a role in kidney selenium homeostasis by mediating renal endocytosis of selenoprotein SEPP1. Mediates renal uptake of the antiapoptotic protein BIRC5/survivin which may be important for functional integrity of the kidney. Mediates renal uptake of matrix metalloproteinase MMP2 in complex with metalloproteinase inhibitor TIMP1. Mediates endocytosis of Sonic hedgehog protein N-product (ShhN), the active product of SHH. Also mediates ShhN transcytosis. In the embryonic neuroepithelium, mediates endocytic uptake and degradation of BMP4, is required for correct SHH localization in the ventral neural tube and plays a role in patterning of the ventral telencephalon. Required at the onset of neurulation to sequester SHH on the apical surface of neuroepithelial cells of the rostral diencephalon ventral midline and to control PTCH1-dependent uptake and intracellular trafficking of SHH. During neurulation, required in neuroepithelial cells for uptake of folate bound to the folate receptor FOLR1 which is necessary for neural tube closure. In the adult brain, negatively regulates BMP signaling in the subependymal zone which enables neurogenesis to proceed. In astrocytes, mediates endocytosis of ALB which is required for the synthesis of the neurotrophic factor oleic acid. Involved in neurite branching. During optic nerve development, required for SHH-mediated migration and proliferation of oligodendrocyte precursor cells. Mediates endocytic uptake and clearance of SHH in the retinal margin which protects retinal progenitor cells from mitogenic stimuli and keeps them quiescent. Plays a role in reproductive organ development by mediating uptake in reproductive tissues of androgen and estrogen bound to the sex hormone binding protein SHBG. Mediates endocytosis of angiotensin-2. Also mediates endocytosis of angiotensin 1-7. Binds to the complex composed of beta-amyloid protein 40 and CLU/APOJ and mediates its endocytosis and lysosomal degradation. Required for embryonic heart development. Required for normal hearing, possibly through interaction with estrogen in the inner ear. The chain is Low-density lipoprotein receptor-related protein 2 (Lrp2) from Mus musculus (Mouse).